Consider the following 1093-residue polypeptide: Mediator of RNA polymerase II transcription subunit 14 (1093 aa).

Disordered stretches follow at residues 1-61 (MPGV…KIDG) and 1035-1060 (TKSD…SQAA). Positions 19–31 (DTQTPSNGDNLRN) are enriched in polar residues. Over residues 41–61 (KGDKDHDPDKESYTGKPKIDG) the composition is skewed to basic and acidic residues. The span at 1040-1056 (DYSTQPVPEKQSQTGAP) shows a compositional bias: polar residues.

This sequence belongs to the Mediator complex subunit 14 family. Component of the Mediator complex.

The protein localises to the nucleus. Functionally, component of the Mediator complex, a coactivator involved in the regulated transcription of nearly all RNA polymerase II-dependent genes. Mediator functions as a bridge to convey information from gene-specific regulatory proteins to the basal RNA polymerase II transcription machinery. Mediator is recruited to promoters by direct interactions with regulatory proteins and serves as a scaffold for the assembly of a functional preinitiation complex with RNA polymerase II and the general transcription factors. This chain is Mediator of RNA polymerase II transcription subunit 14 (rgr1), found in Neosartorya fischeri (strain ATCC 1020 / DSM 3700 / CBS 544.65 / FGSC A1164 / JCM 1740 / NRRL 181 / WB 181) (Aspergillus fischerianus).